The chain runs to 1153 residues: Integrin alpha-M (1153 aa).

The signal sequence occupies residues 1 to 16 (MTLKALLVTALALCHG). Over 17–1105 (FNLDTEHPMT…TKVEPYEVHN (1089 aa)) the chain is Extracellular. FG-GAP repeat units follow at residues 18–75 (NLDT…RCHP) and 76–135 (IPLQ…RPPQ). An N-linked (GlcNAc...) asparagine glycan is attached at asparagine 58. A disulfide bridge connects residues cysteine 66 and cysteine 73. Asparagine 86 carries an N-linked (GlcNAc...) asparagine glycan. A disulfide bridge connects residues cysteine 105 and cysteine 123. In terms of domain architecture, VWFA spans 164 to 338 (IDFQKMKEFV…QEKIFAIEGT (175 aa)). 5 FG-GAP repeats span residues 339–390 (QTGS…VTFI), 391–442 (NTTR…FGTW), 443–503 (EPHT…RARW), 506–564 (EALL…ASLS), and 569–629 (HRII…FSPK). A glycan (N-linked (GlcNAc...) asparagine) is linked at asparagine 391. 12 residues coordinate Ca(2+): aspartate 465, aspartate 467, aspartate 469, asparagine 471, asparagine 473, aspartate 529, asparagine 531, aspartate 533, aspartate 537, aspartate 592, aspartate 596, and aspartate 600. Cysteines 654 and 711 form a disulfide. N-linked (GlcNAc...) asparagine glycans are attached at residues asparagine 696, asparagine 734, asparagine 772, asparagine 801, asparagine 881, asparagine 907, asparagine 941, asparagine 980, asparagine 994, and asparagine 1022. Cysteine 770 and cysteine 776 are disulfide-bonded. Cystine bridges form between cysteine 999–cysteine 1023 and cysteine 1028–cysteine 1033. 3 N-linked (GlcNAc...) asparagine glycosylation sites follow: asparagine 1045, asparagine 1051, and asparagine 1076. Residues 1106 to 1129 (PVPLIVGSSIGGLVLLALITAGLY) traverse the membrane as a helical segment. Over 1130 to 1153 (KLGFFKRQYKDMMNEAAPQDAPPQ) the chain is Cytoplasmic. The GFFKR motif signature appears at 1132-1136 (GFFKR).

Belongs to the integrin alpha chain family. As to quaternary structure, heterodimer of an alpha and a beta subunit. ITGAM associates with ITGB2. Found in a complex with CD177 and ITGB2/CD18. Interacts with JAM3. Interacts with THBD. Interacts with complement factor H/CFH; this interaction mediates adhesion of neutrophils to pathogens leading to pathogen clearance. Interacts with TMEM268; this interaction inhibits ITGAM degradation via the endosome-lysosome pathway. As to expression, predominantly expressed in monocytes and granulocytes. Expressed in a subset of peritoneal mast cells. Expressed in microglia (at protein level).

It is found in the cell membrane. The protein localises to the membrane raft. In terms of biological role, integrin ITGAM/ITGB2 is implicated in various adhesive interactions of monocytes, macrophages and granulocytes as well as in mediating the uptake of complement-coated particles and pathogens. It is identical with CR-3, the receptor for the iC3b fragment of the third complement component. It probably recognizes the R-G-D peptide in C3b. Integrin ITGAM/ITGB2 is also a receptor for fibrinogen, factor X and ICAM1. It recognizes P1 and P2 peptides of fibrinogen gamma chain. Regulates neutrophil migration. In association with beta subunit ITGB2/CD18, required for CD177-PRTN3-mediated activation of TNF primed neutrophils. May regulate phagocytosis-induced apoptosis in extravasated neutrophils. May play a role in mast cell development. Required with TYROBP/DAP12 in microglia to control production of microglial superoxide ions which promote the neuronal apoptosis that occurs during brain development. This chain is Integrin alpha-M (Itgam), found in Mus musculus (Mouse).